The chain runs to 354 residues: Protein RecA (354 aa).

67–74 (GPESSGKT) lines the ATP pocket. A disordered region spans residues 333-354 (MNEFVPSSEEQAEASLSEDHDQ).

The protein belongs to the RecA family.

It localises to the cytoplasm. In terms of biological role, can catalyze the hydrolysis of ATP in the presence of single-stranded DNA, the ATP-dependent uptake of single-stranded DNA by duplex DNA, and the ATP-dependent hybridization of homologous single-stranded DNAs. It interacts with LexA causing its activation and leading to its autocatalytic cleavage. This is Protein RecA from Laribacter hongkongensis (strain HLHK9).